A 1434-amino-acid chain; its full sequence is Probable ATP-dependent RNA helicase spindle-E (1434 aa).

The 170-residue stretch at 126–295 folds into the Helicase ATP-binding domain; it reads INAINENPVV…FANESSAPPV (170 aa). Residue 139 to 146 coordinates ATP; the sequence is GETGCGKT. The DEAH box signature appears at 241–244; that stretch reads DEVH. A Helicase C-terminal domain is found at 356–527; the sequence is TGKSYNQSLR…NCVLKAKELK (172 aa). In terms of domain architecture, Tudor spans 936 to 999; that stretch reads AGAITKGLML…RLMSQDLLRH (64 aa).

The protein belongs to the DEAD box helicase family. DEAH subfamily.

It localises to the cytoplasm. It catalyses the reaction ATP + H2O = ADP + phosphate + H(+). Probable ATP-binding RNA helicase which plays a central role during spermatogenesis and oogenesis by repressing transposable elements and preventing their mobilization, which is essential for the germline integrity. Acts via the piRNA metabolic process, which mediates the repression of transposable elements during meiosis by forming complexes composed of piRNAs and Piwi and govern the methylation and subsequent repression of transposons. Involved in the repression of LTR retrotransposon copia. Also involved in telomere regulation by repressing specialized telomeric retroelements HeT-A, TAHRE, and TART; Drosophila telomeres being maintained by transposition of specialized telomeric retroelements. Involved in telomeric trans-silencing, a repression mechanism by which a transposon or a transgene inserted in subtelomeric heterochromatin has the capacity to repress in trans in the female germline, a homologous transposon, or transgene located in euchromatin. Involved in the repression of testis-expressed Stellate genes by the homologous Su(Ste) repeats. Required for anteroposterior and dorsoventral axis formation during oogenesis. The protein is Probable ATP-dependent RNA helicase spindle-E (spn-E) of Drosophila persimilis (Fruit fly).